A 424-amino-acid chain; its full sequence is uncharacterized protein (424 aa).

N6-(pyridoxal phosphate)lysine is present on Lys259.

The protein belongs to the class-III pyridoxal-phosphate-dependent aminotransferase family. The cofactor is pyridoxal 5'-phosphate.

This is an uncharacterized protein from Archaeoglobus fulgidus (strain ATCC 49558 / DSM 4304 / JCM 9628 / NBRC 100126 / VC-16).